Here is a 525-residue protein sequence, read N- to C-terminus: GMP synthase [glutamine-hydrolyzing] (525 aa).

Residues arginine 9–leucine 207 enclose the Glutamine amidotransferase type-1 domain. Catalysis depends on cysteine 86, which acts as the Nucleophile. Residues histidine 181 and glutamate 183 contribute to the active site. A GMPS ATP-PPase domain is found at tryptophan 208 to arginine 400. Serine 235 to serine 241 is an ATP binding site.

Homodimer.

It carries out the reaction XMP + L-glutamine + ATP + H2O = GMP + L-glutamate + AMP + diphosphate + 2 H(+). It participates in purine metabolism; GMP biosynthesis; GMP from XMP (L-Gln route): step 1/1. Catalyzes the synthesis of GMP from XMP. This is GMP synthase [glutamine-hydrolyzing] from Pseudomonas syringae pv. syringae (strain B728a).